The primary structure comprises 161 residues: Putative HTH-type transcriptional regulator MT1325 (161 aa).

An HTH rrf2-type domain is found at 2 to 132 (RMSAKAEYAV…EETTLADVAG (131 aa)).

In Mycobacterium tuberculosis (strain CDC 1551 / Oshkosh), this protein is Putative HTH-type transcriptional regulator MT1325.